A 93-amino-acid polypeptide reads, in one-letter code: Transcription factor PRE3 (93 aa).

The bHLH domain maps to 6 to 61 (SRSRQSSGTSRISEDQINDLIIKLQQLLPELRDSRRSDKVSAARVLQDTCNYIRNL).

In terms of assembly, homodimer. Interacts with BHLH 147, BHLH148, BHLH149, BHLH150 and IBH1. Interacts with SIEL. As to expression, expressed in root and shoot meristems, and young siliques. Low levels detected in all aerial tissues.

It is found in the nucleus. It localises to the cytoplasm. Atypical and probable non DNA-binding bHLH transcription factor required for MONOPTEROS-dependent root initiation in embryo. Promotes the correct definition of the hypophysis cell division plane. Transcriptionally controlled by MONOPTEROS. Moves from its site of synthesis in pro-embryos cells into the hypophysis. Regulates brassinosteroid (BR) signaling by sequestering negative BR signaling components. May function as positive regulator of gibberellin signaling. May play a role in the regulation of light signaling and possibly auxin signaling. In Arabidopsis thaliana (Mouse-ear cress), this protein is Transcription factor PRE3 (PRE3).